Here is a 286-residue protein sequence, read N- to C-terminus: Bifunctional protein FolD (286 aa).

NADP(+) is bound by residues 165 to 167 (GRS) and S190.

This sequence belongs to the tetrahydrofolate dehydrogenase/cyclohydrolase family. In terms of assembly, homodimer.

It carries out the reaction (6R)-5,10-methylene-5,6,7,8-tetrahydrofolate + NADP(+) = (6R)-5,10-methenyltetrahydrofolate + NADPH. The enzyme catalyses (6R)-5,10-methenyltetrahydrofolate + H2O = (6R)-10-formyltetrahydrofolate + H(+). The protein operates within one-carbon metabolism; tetrahydrofolate interconversion. Its function is as follows. Catalyzes the oxidation of 5,10-methylenetetrahydrofolate to 5,10-methenyltetrahydrofolate and then the hydrolysis of 5,10-methenyltetrahydrofolate to 10-formyltetrahydrofolate. This chain is Bifunctional protein FolD, found in Staphylococcus aureus (strain MRSA252).